A 98-amino-acid chain; its full sequence is NADH-ubiquinone oxidoreductase chain 4L (98 aa).

Transmembrane regions (helical) follow at residues 1-21 (MSMV…GLLM), 29-49 (SLLC…VTIL), and 61-81 (IILL…LVMV).

This sequence belongs to the complex I subunit 4L family. In terms of assembly, core subunit of respiratory chain NADH dehydrogenase (Complex I) which is composed of 45 different subunits.

The protein resides in the mitochondrion inner membrane. The enzyme catalyses a ubiquinone + NADH + 5 H(+)(in) = a ubiquinol + NAD(+) + 4 H(+)(out). Functionally, core subunit of the mitochondrial membrane respiratory chain NADH dehydrogenase (Complex I) which catalyzes electron transfer from NADH through the respiratory chain, using ubiquinone as an electron acceptor. Part of the enzyme membrane arm which is embedded in the lipid bilayer and involved in proton translocation. In Erignathus barbatus (Bearded seal), this protein is NADH-ubiquinone oxidoreductase chain 4L (MT-ND4L).